An 867-amino-acid polypeptide reads, in one-letter code: Alanine--tRNA ligase (867 aa).

Positions 558, 562, 660, and 664 each coordinate Zn(2+).

The protein belongs to the class-II aminoacyl-tRNA synthetase family. Requires Zn(2+) as cofactor.

The protein resides in the cytoplasm. The catalysed reaction is tRNA(Ala) + L-alanine + ATP = L-alanyl-tRNA(Ala) + AMP + diphosphate. Its function is as follows. Catalyzes the attachment of alanine to tRNA(Ala) in a two-step reaction: alanine is first activated by ATP to form Ala-AMP and then transferred to the acceptor end of tRNA(Ala). Also edits incorrectly charged Ser-tRNA(Ala) and Gly-tRNA(Ala) via its editing domain. In Fervidobacterium nodosum (strain ATCC 35602 / DSM 5306 / Rt17-B1), this protein is Alanine--tRNA ligase.